The following is a 96-amino-acid chain: Small ribosomal subunit protein bS16 (96 aa).

It belongs to the bacterial ribosomal protein bS16 family.

This chain is Small ribosomal subunit protein bS16, found in Oenococcus oeni (strain ATCC BAA-331 / PSU-1).